Consider the following 328-residue polypeptide: Gonadotropin-releasing hormone receptor (328 aa).

Residues 1-38 (MANSDSPEQNENHCSAINSSIPLTPGSLPTLTLSGKIR) lie on the Extracellular side of the membrane. Asn-18 carries N-linked (GlcNAc...) asparagine glycosylation. Residues 39–58 (VTVTFFLFLLSTIFNTSFLL) form a helical membrane-spanning segment. Residues 59-77 (KLQNWTQRKEKRKKLSRMK) are Cytoplasmic-facing. Residues 78–97 (LLLKHLTLANLLETLIVMPL) form a helical membrane-spanning segment. The Extracellular segment spans residues 98–115 (DGMWNITVQWYAGELLCK). Residue Asn-102 is glycosylated (N-linked (GlcNAc...) asparagine). Cys-114 and Cys-196 are joined by a disulfide. A helical membrane pass occupies residues 116–137 (VLSYLKLFSMYAPAFMMVVISL). Over 138-164 (DRSLAITKPLAVKSNSKLGQFMIGLAW) the chain is Cytoplasmic. A helical transmembrane segment spans residues 165 to 184 (LLSSIFAGPQLYIFGMIHLA). Over 185-212 (DDSGQTEGFSQCVTHCSFPQWWHQAFYN) the chain is Extracellular. The helical transmembrane segment at 213–232 (FFTFSCLFIIPLLIMVICNA) threads the bilayer. At 233 to 281 (KIIFTLTRVLHQDPHKLQLNQSKNNIPRARLRTLKMTVAFATSFTVCWT) the chain is on the cytoplasmic side. A helical membrane pass occupies residues 282 to 300 (PYYVLGIWYWFDPDMVNRV). Residues 301–306 (SDPVNH) lie on the Extracellular side of the membrane. The helical transmembrane segment at 307–326 (FFFLFAFLNPCFDPLIYGYF) threads the bilayer. At 327–328 (SL) the chain is on the cytoplasmic side.

It belongs to the G-protein coupled receptor 1 family.

The protein resides in the cell membrane. In terms of biological role, receptor for gonadotropin releasing hormone (GnRH) that mediates the action of GnRH to stimulate the secretion of the gonadotropic hormones luteinizing hormone (LH) and follicle-stimulating hormone (FSH). This receptor mediates its action by association with G-proteins that activate a phosphatidylinositol-calcium second messenger system. The chain is Gonadotropin-releasing hormone receptor (GNRHR) from Bos taurus (Bovine).